The following is a 318-amino-acid chain: Aspartate carbamoyltransferase catalytic subunit (318 aa).

Residues Arg62 and Thr63 each coordinate carbamoyl phosphate. Lys90 provides a ligand contact to L-aspartate. Arg112, His140, and Gln143 together coordinate carbamoyl phosphate. 2 residues coordinate L-aspartate: Arg173 and Arg227. Carbamoyl phosphate-binding residues include Gly268 and Pro269.

It belongs to the aspartate/ornithine carbamoyltransferase superfamily. ATCase family. In terms of assembly, heterododecamer (2C3:3R2) of six catalytic PyrB chains organized as two trimers (C3), and six regulatory PyrI chains organized as three dimers (R2).

It catalyses the reaction carbamoyl phosphate + L-aspartate = N-carbamoyl-L-aspartate + phosphate + H(+). It functions in the pathway pyrimidine metabolism; UMP biosynthesis via de novo pathway; (S)-dihydroorotate from bicarbonate: step 2/3. In terms of biological role, catalyzes the condensation of carbamoyl phosphate and aspartate to form carbamoyl aspartate and inorganic phosphate, the committed step in the de novo pyrimidine nucleotide biosynthesis pathway. The sequence is that of Aspartate carbamoyltransferase catalytic subunit from Desulfotalea psychrophila (strain LSv54 / DSM 12343).